The chain runs to 202 residues: Holliday junction branch migration complex subunit RuvA (202 aa).

The interval 1 to 65 (MIAYVEGRVA…EDALELFGFS (65 aa)) is domain I. The domain II stretch occupies residues 66–144 (TWDERQTFMV…VEDLPAGLVL (79 aa)). The interval 145 to 155 (AGGAAPGGVFR) is flexible linker. The interval 155–202 (RDALAGLGNLGYLEDEAAPVLKEVLKAEPDLDVAGALRAALKALARGR) is domain III.

This sequence belongs to the RuvA family. As to quaternary structure, homotetramer. Forms an RuvA(8)-RuvB(12)-Holliday junction (HJ) complex. HJ DNA is sandwiched between 2 RuvA tetramers; dsDNA enters through RuvA and exits via RuvB. An RuvB hexamer assembles on each DNA strand where it exits the tetramer. Each RuvB hexamer is contacted by two RuvA subunits (via domain III) on 2 adjacent RuvB subunits; this complex drives branch migration. In the full resolvosome a probable DNA-RuvA(4)-RuvB(12)-RuvC(2) complex forms which resolves the HJ.

The protein localises to the cytoplasm. The RuvA-RuvB-RuvC complex processes Holliday junction (HJ) DNA during genetic recombination and DNA repair, while the RuvA-RuvB complex plays an important role in the rescue of blocked DNA replication forks via replication fork reversal (RFR). RuvA specifically binds to HJ cruciform DNA, conferring on it an open structure. The RuvB hexamer acts as an ATP-dependent pump, pulling dsDNA into and through the RuvAB complex. HJ branch migration allows RuvC to scan DNA until it finds its consensus sequence, where it cleaves and resolves the cruciform DNA. This is Holliday junction branch migration complex subunit RuvA from Nitratidesulfovibrio vulgaris (strain DSM 19637 / Miyazaki F) (Desulfovibrio vulgaris).